The primary structure comprises 118 residues: Large ribosomal subunit protein bL20 (118 aa).

This sequence belongs to the bacterial ribosomal protein bL20 family.

In terms of biological role, binds directly to 23S ribosomal RNA and is necessary for the in vitro assembly process of the 50S ribosomal subunit. It is not involved in the protein synthesizing functions of that subunit. This Lactobacillus acidophilus (strain ATCC 700396 / NCK56 / N2 / NCFM) protein is Large ribosomal subunit protein bL20.